The primary structure comprises 496 residues: Cytochrome P450 4ae1 (496 aa).

Cys443 provides a ligand contact to heme.

This sequence belongs to the cytochrome P450 family. It depends on heme as a cofactor.

It localises to the endoplasmic reticulum membrane. The protein localises to the microsome membrane. Functionally, may be involved in the metabolism of insect hormones and in the breakdown of synthetic insecticides. This Drosophila melanogaster (Fruit fly) protein is Cytochrome P450 4ae1 (Cyp4ae1).